The chain runs to 166 residues: Holin-like protein TcdE (166 aa).

4 consecutive transmembrane segments (helical) span residues 15–35, 36–56, 77–97, and 111–131; these read IFFY…LSEH, IFIK…CLSA, MIAC…NFLF, and HLGI…VSIL.

The protein belongs to the bacteriophage holin family. Homomultimer.

It localises to the cell membrane. Holin-like protein required for secretion of toxins A and B (TcdA and TcdB). Facilitates the release of toxins to the extracellular environment without causing the bacterial cell lysis. In terms of biological role, has weak activity, suggesting that it may act as a antiholin when multiple forms are produced. This chain is Holin-like protein TcdE, found in Clostridioides difficile (Peptoclostridium difficile).